A 143-amino-acid chain; its full sequence is Large ribosomal subunit protein uL15 (143 aa).

Composition is skewed to basic residues over residues 1 to 13 (MIRK…KMRG) and 23 to 38 (KKHR…GNAG). Residues 1-38 (MIRKSKKITKMRGSRTCGYGEAKKHRGAGHRGGRGNAG) form a disordered region.

This sequence belongs to the universal ribosomal protein uL15 family. In terms of assembly, part of the 50S ribosomal subunit.

Binds to the 23S rRNA. This Methanococcus maripaludis (strain C7 / ATCC BAA-1331) protein is Large ribosomal subunit protein uL15.